A 226-amino-acid chain; its full sequence is Putative N-acetylmannosamine-6-phosphate 2-epimerase 1 (226 aa).

This sequence belongs to the NanE family.

The enzyme catalyses an N-acyl-D-glucosamine 6-phosphate = an N-acyl-D-mannosamine 6-phosphate. Its pathway is amino-sugar metabolism; N-acetylneuraminate degradation; D-fructose 6-phosphate from N-acetylneuraminate: step 3/5. Converts N-acetylmannosamine-6-phosphate (ManNAc-6-P) to N-acetylglucosamine-6-phosphate (GlcNAc-6-P). The protein is Putative N-acetylmannosamine-6-phosphate 2-epimerase 1 (nanE1) of Salmonella typhimurium (strain LT2 / SGSC1412 / ATCC 700720).